Reading from the N-terminus, the 199-residue chain is Recombination protein RecR (199 aa).

The segment at 56–71 (CAVCGNIAEETQCRIC) adopts a C4-type zinc-finger fold. The Toprim domain occupies 79–174 (TVICVVEEPK…KVTRLASGLP (96 aa)).

This sequence belongs to the RecR family.

In terms of biological role, may play a role in DNA repair. It seems to be involved in an RecBC-independent recombinational process of DNA repair. It may act with RecF and RecO. This Thermobifida fusca (strain YX) protein is Recombination protein RecR.